Consider the following 554-residue polypeptide: Trimethyltridecatetraene synthase (554 aa).

The helical transmembrane segment at 1 to 21 threads the bilayer; the sequence is MSAAVALAVILAVYVVLRYIS. Cys464 is a heme binding site.

This sequence belongs to the cytochrome P450 family. The cofactor is heme.

The protein localises to the membrane. The enzyme catalyses (6E,10E)-geranyllinalool + reduced [NADPH--hemoprotein reductase] + O2 = (3E,7E)-4,8,12-trimethyltrideca 1,3,7,11-tetraene + but-3-en-2-one + oxidized [NADPH--hemoprotein reductase] + 2 H2O + H(+). Its pathway is secondary metabolite biosynthesis; terpenoid biosynthesis. Component of the volatile terpenes biosynthesis pathways. Converts mainly geranyllinalool to trimethyltridecatetraene (TMTT). This is Trimethyltridecatetraene synthase from Zea mays (Maize).